The sequence spans 1228 residues: Minor fimbrium subunit Mfa5 (1228 aa).

An N-terminal signal peptide occupies residues M1 to A25. Positions D144–A267 constitute a VWFA domain.

In terms of assembly, minor fimbriae are composed of a structural subunit, most often Mfa1, and the accessory subunits Mfa3, Mfa4 and Mfa5. Fimbrium assembly occurs by linear, head-to-tail oligomerization of fimbrial subunits. This is mediated via insertion of a C-terminal beta-strand from one subunit into a groove in the N-terminal domain of the following subunit.

Its subcellular location is the fimbrium. Functionally, accessory subunit of the minor fimbriae. These filamentous pili are attached to the cell surface; they mediate biofilm formation, adhesion onto host cells and onto other bacteria that are part of the oral microbiome. They play an important role in invasion of periodontal tissues and are recognized as major virulence factors. Fimbrium subunits from different strains have highly divergent sequences, and this correlates with pathogenicity. This chain is Minor fimbrium subunit Mfa5, found in Porphyromonas gingivalis (strain ATCC 33277 / DSM 20709 / CIP 103683 / JCM 12257 / NCTC 11834 / 2561).